A 341-amino-acid polypeptide reads, in one-letter code: Cysteine and histidine-rich domain-containing protein 1 (341 aa).

16 residues coordinate Zn(2+): cysteine 5, cysteine 10, cysteine 24, histidine 27, cysteine 42, cysteine 43, cysteine 59, histidine 64, cysteine 155, cysteine 160, cysteine 174, histidine 177, cysteine 192, cysteine 193, cysteine 209, and histidine 214. 2 consecutive CHORD domains span residues 5–64 and 155–214; these read CYNK…KGPH and CKNG…RGKH. Residues 61–81 form a disordered region; it reads KGPHNQEKPAEPVKPEVKSSL. Residues 64-81 are compositionally biased toward basic and acidic residues; that stretch reads HNQEKPAEPVKPEVKSSL. The region spanning 225–314 is the CS domain; that stretch reads VVPCRFDWHQ…AEPMSWARLD (90 aa). A disordered region spans residues 313-341; the sequence is LDLPPVAPPKEKEKEKDVDSEDECDDDED. Residues 330-341 show a composition bias toward acidic residues; it reads VDSEDECDDDED.

In terms of biological role, regulates centrosome duplication. The polypeptide is Cysteine and histidine-rich domain-containing protein 1 (chordc1) (Danio rerio (Zebrafish)).